The chain runs to 373 residues: Mannitol-1-phosphate 5-dehydrogenase (373 aa).

3-14 (ALHFGAGNIGRG) serves as a coordination point for NAD(+).

The protein belongs to the mannitol dehydrogenase family.

The enzyme catalyses D-mannitol 1-phosphate + NAD(+) = beta-D-fructose 6-phosphate + NADH + H(+). The sequence is that of Mannitol-1-phosphate 5-dehydrogenase from Bacillus pumilus (strain SAFR-032).